Reading from the N-terminus, the 418-residue chain is Histidine--tRNA ligase (418 aa).

The protein belongs to the class-II aminoacyl-tRNA synthetase family. Homodimer.

It localises to the cytoplasm. The enzyme catalyses tRNA(His) + L-histidine + ATP = L-histidyl-tRNA(His) + AMP + diphosphate + H(+). The chain is Histidine--tRNA ligase from Dehalococcoides mccartyi (strain ATCC BAA-2100 / JCM 16839 / KCTC 5957 / BAV1).